Here is a 231-residue protein sequence, read N- to C-terminus: 2-C-methyl-D-erythritol 4-phosphate cytidylyltransferase (231 aa).

The protein belongs to the IspD/TarI cytidylyltransferase family. IspD subfamily.

It carries out the reaction 2-C-methyl-D-erythritol 4-phosphate + CTP + H(+) = 4-CDP-2-C-methyl-D-erythritol + diphosphate. It functions in the pathway isoprenoid biosynthesis; isopentenyl diphosphate biosynthesis via DXP pathway; isopentenyl diphosphate from 1-deoxy-D-xylulose 5-phosphate: step 2/6. Catalyzes the formation of 4-diphosphocytidyl-2-C-methyl-D-erythritol from CTP and 2-C-methyl-D-erythritol 4-phosphate (MEP). This chain is 2-C-methyl-D-erythritol 4-phosphate cytidylyltransferase, found in Rubrobacter xylanophilus (strain DSM 9941 / JCM 11954 / NBRC 16129 / PRD-1).